The following is a 140-amino-acid chain: MAKKVIGEIKLQIAATKANPSPPVGPALGQKGVNIMEFCKAFNEKTKGMEGFNIPVIITVYADRSFTFITKQPPATDLIKKTAGVQKGSDNPLKNKVGKLTKAQVLEIVEKKMADLNTKDKEQAARIIAGSARSMGITVE.

Belongs to the universal ribosomal protein uL11 family. As to quaternary structure, part of the ribosomal stalk of the 50S ribosomal subunit. Interacts with L10 and the large rRNA to form the base of the stalk. L10 forms an elongated spine to which L12 dimers bind in a sequential fashion forming a multimeric L10(L12)X complex. In terms of processing, one or more lysine residues are methylated.

Forms part of the ribosomal stalk which helps the ribosome interact with GTP-bound translation factors. The chain is Large ribosomal subunit protein uL11 from Campylobacter hominis (strain ATCC BAA-381 / DSM 21671 / CCUG 45161 / LMG 19568 / NCTC 13146 / CH001A).